We begin with the raw amino-acid sequence, 342 residues long: Protein-glutamate methylesterase/protein-glutamine glutaminase 2 (342 aa).

Residues 2 to 119 form the Response regulatory domain; the sequence is NIGIVNDLPL…GGSADPSQPL (118 aa). At D53 the chain carries 4-aspartylphosphate. The region spanning 144 to 337 is the CheB-type methylesterase domain; sequence PAPQGALPPL…DQLISLVQRN (194 aa). Residues S159, H186, and D279 contribute to the active site.

Belongs to the CheB family. Phosphorylated by CheA. Phosphorylation of the N-terminal regulatory domain activates the methylesterase activity.

The protein resides in the cytoplasm. The enzyme catalyses [protein]-L-glutamate 5-O-methyl ester + H2O = L-glutamyl-[protein] + methanol + H(+). The catalysed reaction is L-glutaminyl-[protein] + H2O = L-glutamyl-[protein] + NH4(+). Its function is as follows. Involved in chemotaxis. Part of a chemotaxis signal transduction system that modulates chemotaxis in response to various stimuli. Catalyzes the demethylation of specific methylglutamate residues introduced into the chemoreceptors (methyl-accepting chemotaxis proteins or MCP) by CheR. Also mediates the irreversible deamidation of specific glutamine residues to glutamic acid. The chain is Protein-glutamate methylesterase/protein-glutamine glutaminase 2 from Burkholderia mallei (strain ATCC 23344).